The sequence spans 753 residues: MTILNHTLGFPRVGLRRELKKAQESYWAGNSTREELLTVGRELRARHWDQQKQAGIDLLPVGDFAWYDHVLTTSLLLGNVPPRHQNKDGSVDIDTLFRIGRGRAPTGEPAAAAEMTKWFNTNYHYMVPEFVKGQQFKLTWTQLLEEVDEALALGHNVKPVLLGPVTYLWLGKVKGEQFDRLSLLNDILPVYQQVLAELAKRGIEWVQIDEPALVLELPQAWLDAYKPAYDALQGQVKLLLTTYFEGVTPNLDTITALPVQGLHVDLVHGKDDVVELHKRLPSDWLLSAGLINGRNVWRADLTEKYAQIKDIVGKRDLWVASSCSLLHSPIDLSVETRLDAEVKSWFAFALQKCHELALLRDALNSGDTAALAEWSAPIQARRNSTRVHNPAVEKRLAAITAQDSQRANVYEVRAEAQRARFKLPAWPTTTIGSFPQTTEIRTLRLDFKKGNLDANNYRTGIAEHIRQAIVEQERLGLDVLVHGEAERNDMVEYFGEHLDGFVFTQNGWVQSYGSRCVKPPIVIGDVSRPAPITVEWAKYAQSLTDKPVKGMLTGPVTILCWSFPREDVSRETIAKQIALALRDEVADLEAAGIGIIQIDEPALREGLPLRRSDWDAYLQWGVEAFRINAAVAKDDTQIHTHMCYCEFNDIMDSIAALDADVITIETSRSDMELLESFEEFDYPNEIGPGVYDIHSPNVPSVEWIEALLKKAAKRIPAERLWVNPDCGLKTRGWPETRAALANMVQAAQNLRRG.

Residues 17 to 20 (RELK) and Lys-117 each bind 5-methyltetrahydropteroyltri-L-glutamate. L-homocysteine contacts are provided by residues 431–433 (IGS) and Glu-484. L-methionine contacts are provided by residues 431–433 (IGS) and Glu-484. 5-methyltetrahydropteroyltri-L-glutamate-binding positions include 515-516 (RC) and Trp-561. Asp-599 lines the L-homocysteine pocket. Residue Asp-599 coordinates L-methionine. Glu-605 contacts 5-methyltetrahydropteroyltri-L-glutamate. 3 residues coordinate Zn(2+): His-641, Cys-643, and Glu-665. His-694 acts as the Proton donor in catalysis. Zn(2+) is bound at residue Cys-726.

Belongs to the vitamin-B12 independent methionine synthase family. Requires Zn(2+) as cofactor.

The catalysed reaction is 5-methyltetrahydropteroyltri-L-glutamate + L-homocysteine = tetrahydropteroyltri-L-glutamate + L-methionine. It functions in the pathway amino-acid biosynthesis; L-methionine biosynthesis via de novo pathway; L-methionine from L-homocysteine (MetE route): step 1/1. In terms of biological role, catalyzes the transfer of a methyl group from 5-methyltetrahydrofolate to homocysteine resulting in methionine formation. This chain is 5-methyltetrahydropteroyltriglutamate--homocysteine methyltransferase, found in Escherichia coli (strain ATCC 8739 / DSM 1576 / NBRC 3972 / NCIMB 8545 / WDCM 00012 / Crooks).